Consider the following 500-residue polypeptide: Cholesterol 24-hydroxylase (500 aa).

A helical membrane pass occupies residues 3–23; sequence PGLLLLGSAVLLAFGLCCTFV. A heme-binding site is contributed by C437.

Belongs to the cytochrome P450 family. Requires heme as cofactor. As to expression, expressed in brain. The mRNA was broadly distributed with higher levels in gray matter zones and lower levels in regions rich in white matter. Not detected in fetal sample but its expression increases linearly with age.

It localises to the endoplasmic reticulum membrane. Its subcellular location is the microsome membrane. The protein localises to the postsynapse. It is found in the presynapse. The protein resides in the cell projection. It localises to the dendrite. It carries out the reaction cholesterol + reduced [NADPH--hemoprotein reductase] + O2 = (24S)-hydroxycholesterol + oxidized [NADPH--hemoprotein reductase] + H2O + H(+). The catalysed reaction is cholestanol + reduced [NADPH--hemoprotein reductase] + O2 = (24S)-hydroxycholestanol + oxidized [NADPH--hemoprotein reductase] + H2O + H(+). It catalyses the reaction 7-dehydrocholesterol + reduced [NADPH--hemoprotein reductase] + O2 = cholesta-5,7-dien-3beta,24S-diol + oxidized [NADPH--hemoprotein reductase] + H2O + H(+). The enzyme catalyses 7-dehydrocholesterol + reduced [NADPH--hemoprotein reductase] + O2 = cholesta-5,7-dien-3beta,25-diol + oxidized [NADPH--hemoprotein reductase] + H2O + H(+). It carries out the reaction desmosterol + reduced [NADPH--hemoprotein reductase] + O2 = (24Z),26-hydroxydesmosterol + oxidized [NADPH--hemoprotein reductase] + H2O + H(+). The catalysed reaction is desmosterol + reduced [NADPH--hemoprotein reductase] + O2 = (24S)-25-epoxycholesterol + oxidized [NADPH--hemoprotein reductase] + H2O + H(+). It catalyses the reaction 4beta-hydroxycholesterol + reduced [NADPH--hemoprotein reductase] + O2 = 4beta,24S-dihydroxycholesterol + oxidized [NADPH--hemoprotein reductase] + H2O + H(+). The enzyme catalyses (24S)-hydroxycholesterol + reduced [NADPH--hemoprotein reductase] + O2 = (24S,25R)-24,26-dihydroxycholesterol + oxidized [NADPH--hemoprotein reductase] + H2O + H(+). It carries out the reaction (24S)-hydroxycholesterol + reduced [NADPH--hemoprotein reductase] + O2 = 24S,25-dihydroxycholesterol + oxidized [NADPH--hemoprotein reductase] + H2O + H(+). The catalysed reaction is 7alpha-hydroxycholesterol + reduced [NADPH--hemoprotein reductase] + O2 = (24S)-7alpha-dihydroxycholesterol + oxidized [NADPH--hemoprotein reductase] + H2O + H(+). It catalyses the reaction progesterone + reduced [NADPH--hemoprotein reductase] + O2 = 17alpha-hydroxyprogesterone + oxidized [NADPH--hemoprotein reductase] + H2O + H(+). The enzyme catalyses testosterone + reduced [NADPH--hemoprotein reductase] + O2 = 16beta,17beta-dihydroxyandrost-4-en-3-one + oxidized [NADPH--hemoprotein reductase] + H2O + H(+). It carries out the reaction testosterone + reduced [NADPH--hemoprotein reductase] + O2 = 2-hydroxytestosterone + oxidized [NADPH--hemoprotein reductase] + H2O + H(+). The catalysed reaction is testosterone + reduced [NADPH--hemoprotein reductase] + O2 = 6beta,17beta-dihydroxyandrost-4-en-3-one + oxidized [NADPH--hemoprotein reductase] + H2O + H(+). It functions in the pathway steroid metabolism; cholesterol degradation. Its pathway is lipid metabolism; C21-steroid hormone metabolism. Its function is as follows. P450 monooxygenase that plays a major role in cholesterol homeostasis in the brain. Primarily catalyzes the hydroxylation (with S stereochemistry) at C-24 of cholesterol side chain, triggering cholesterol diffusion out of neurons and its further degradation. By promoting constant cholesterol elimination in neurons, may activate the mevalonate pathway and coordinate the synthesis of new cholesterol and nonsterol isoprenoids involved in synaptic activity and learning. Further hydroxylates cholesterol derivatives and hormone steroids on both the ring and side chain of these molecules, converting them into active oxysterols involved in lipid signaling and biosynthesis. Acts as an epoxidase converting cholesta-5,24-dien-3beta-ol/desmosterol into (24S),25-epoxycholesterol, an abundant lipid ligand of nuclear NR1H2 and NR1H3 receptors shown to promote neurogenesis in developing brain. May also catalyze the oxidative metabolism of xenobiotics, such as clotrimazole. The chain is Cholesterol 24-hydroxylase from Homo sapiens (Human).